The sequence spans 422 residues: Tk-subtilisin (422 aa).

Positions 1–24 are cleaved as a signal peptide; that stretch reads MKKSIALVLSIVLLAALFAVPASA. A propeptide spanning residues 25–106 is cleaved from the precursor; that stretch reads GEQNTIRVIV…SWLGGGSTQP (82 aa). Positions 111-417 constitute a Peptidase S8 domain; it reads PWGIERVKAP…YGVVRAALAV (307 aa). Active-site charge relay system residues include aspartate 139, histidine 177, and serine 348.

This sequence belongs to the peptidase S8 family. In terms of assembly, monomer. Ca(2+) is required as a cofactor.

Its subcellular location is the secreted. In terms of biological role, has a broad substrate specificity with a slight preference to large hydrophobic amino acid residues at the P1 position. The chain is Tk-subtilisin from Thermococcus kodakarensis (strain ATCC BAA-918 / JCM 12380 / KOD1) (Pyrococcus kodakaraensis (strain KOD1)).